A 188-amino-acid chain; its full sequence is MISPIKNIKNVFPINTANTEYIVRNIYPRVEHGYFNESPNIYDKKYISGITRSMAQLKIEEFINEKSRRLNYMKTMYSPCPEDFQPISRAEASTPEGSWLTVISGKRPMGQFSVDSLYHPDLHALCELPEISCKIFSKENSDFLYIIVVFRNDSPQGELRANRFIELYDIKREIMQVLRDESPEIKVY.

This sequence belongs to the NleE/OspZ family.

It localises to the secreted. Its subcellular location is the host cytoplasm. The protein resides in the host nucleus. In terms of biological role, inactive effector protein: in contrast to other members of the family, does not have the ability to inhibit host cell NF-kappa-B activation. Probably lacks cysteine S-methyltransferase activity due to its inability to bind S-adenosyl-L-methionine at the C-terminus. This chain is Inactive cysteine S-methyltransferase OspZ, found in Shigella flexneri.